A 222-amino-acid chain; its full sequence is Capsular polysaccharide type 8 biosynthesis protein cap8A (222 aa).

2 helical membrane-spanning segments follow: residues 20–40 (ILIILPLLFLIISAIVTFFVL) and 172–192 (VVNLIGAFFLGLVVALIYIFF).

The protein belongs to the CpsC/CapA family.

Its subcellular location is the cell membrane. Required for the biosynthesis of type 8 capsular polysaccharide (Cap8/CP8). Might act as the chain-length regulator. The sequence is that of Capsular polysaccharide type 8 biosynthesis protein cap8A (cap8A) from Staphylococcus aureus.